A 382-amino-acid chain; its full sequence is Dodecanoyl-[acyl-carrier-protein] hydrolase, chloroplastic (382 aa).

The transit peptide at 1–83 directs the protein to the chloroplast; sequence MATTSLASAF…FSAAEKQWTN (83 aa). Residues N283, H285, and C320 contribute to the active site.

It belongs to the acyl-ACP thioesterase family. Forms homodimers. In terms of tissue distribution, expressed in developing cotyledons. Not detected in leaves.

The protein localises to the plastid. It localises to the chloroplast. It catalyses the reaction dodecanoyl-[ACP] + H2O = dodecanoate + holo-[ACP] + H(+). Functionally, plays an essential role in chain termination during de novo fatty acid synthesis. High thioesterase activity for lauroyl-ACP versus other acyl-ACPs. This Umbellularia californica (California bay laurel) protein is Dodecanoyl-[acyl-carrier-protein] hydrolase, chloroplastic.